Reading from the N-terminus, the 396-residue chain is S-adenosylmethionine synthase (396 aa).

H16 contributes to the ATP binding site. D18 contributes to the Mg(2+) binding site. Residue E44 participates in K(+) binding. Residues E57 and Q100 each coordinate L-methionine. Residues Q100–R110 are flexible loop. ATP is bound by residues D167 to K169, R232 to F233, D241, R247 to K248, A264, and K268. D241 lines the L-methionine pocket. Residue K272 coordinates L-methionine.

The protein belongs to the AdoMet synthase family. In terms of assembly, homotetramer; dimer of dimers. Requires Mg(2+) as cofactor. The cofactor is K(+).

The protein localises to the cytoplasm. It catalyses the reaction L-methionine + ATP + H2O = S-adenosyl-L-methionine + phosphate + diphosphate. It participates in amino-acid biosynthesis; S-adenosyl-L-methionine biosynthesis; S-adenosyl-L-methionine from L-methionine: step 1/1. Functionally, catalyzes the formation of S-adenosylmethionine (AdoMet) from methionine and ATP. The overall synthetic reaction is composed of two sequential steps, AdoMet formation and the subsequent tripolyphosphate hydrolysis which occurs prior to release of AdoMet from the enzyme. This Ralstonia pickettii (strain 12J) protein is S-adenosylmethionine synthase.